Reading from the N-terminus, the 423-residue chain is uncharacterized protein (423 aa).

3 residues coordinate substrate: serine 51, aspartate 138, and asparagine 150. Residues 170-171 (TD) and 214-220 (TGGMRTK) contribute to the ATP site. Positions 315–406 (KGAIIIDENS…EKIHDVLGYS (92 aa)) constitute a PUA domain.

It belongs to the glutamate 5-kinase family.

It localises to the cytoplasm. This is an uncharacterized protein from Saccharomyces cerevisiae (strain ATCC 204508 / S288c) (Baker's yeast).